An 834-amino-acid polypeptide reads, in one-letter code: Periplasmic nitrate reductase (834 aa).

The segment at residues 1–31 is a signal peptide (tat-type signal); sequence MTGELTRREMLKAHAAGIAAATAGIALPAAA. In terms of domain architecture, 4Fe-4S Mo/W bis-MGD-type spans 43–99; that stretch reads ITWSKAPCRFCGTGCGVMVGVKEGQVVATHGDMQAEVNRGLNCIKGYFLSKIMYGTD. Residues C50, C53, C57, and C85 each contribute to the [4Fe-4S] cluster site. Residues K87, Q154, N179, C183, 216–223, 247–251, 266–268, M377, Q381, N487, 513–514, K536, D563, and 723–732 each bind Mo-bis(molybdopterin guanine dinucleotide); these read WGSNMAEM, STFTH, GTD, SD, and TGRVLEHWHS. W799 lines the substrate pocket. Positions 807 and 824 each coordinate Mo-bis(molybdopterin guanine dinucleotide).

Belongs to the prokaryotic molybdopterin-containing oxidoreductase family. NasA/NapA/NarB subfamily. As to quaternary structure, component of the periplasmic nitrate reductase NapAB complex composed of NapA and NapB. [4Fe-4S] cluster is required as a cofactor. It depends on Mo-bis(molybdopterin guanine dinucleotide) as a cofactor. Predicted to be exported by the Tat system. The position of the signal peptide cleavage has not been experimentally proven.

It localises to the periplasm. The catalysed reaction is 2 Fe(II)-[cytochrome] + nitrate + 2 H(+) = 2 Fe(III)-[cytochrome] + nitrite + H2O. Catalytic subunit of the periplasmic nitrate reductase complex NapAB. Receives electrons from NapB and catalyzes the reduction of nitrate to nitrite. The protein is Periplasmic nitrate reductase of Rhizobium meliloti (strain 1021) (Ensifer meliloti).